The following is a 310-amino-acid chain: tRNA dimethylallyltransferase (310 aa).

Position 14–21 (14–21 (GPTASGKS)) interacts with ATP. 16-21 (TASGKS) lines the substrate pocket. Interaction with substrate tRNA stretches follow at residues 39–42 (DSMQ) and 163–167 (QRIVR).

This sequence belongs to the IPP transferase family. As to quaternary structure, monomer. Requires Mg(2+) as cofactor.

It catalyses the reaction adenosine(37) in tRNA + dimethylallyl diphosphate = N(6)-dimethylallyladenosine(37) in tRNA + diphosphate. Functionally, catalyzes the transfer of a dimethylallyl group onto the adenine at position 37 in tRNAs that read codons beginning with uridine, leading to the formation of N6-(dimethylallyl)adenosine (i(6)A). This is tRNA dimethylallyltransferase from Brucella suis biovar 1 (strain 1330).